Consider the following 239-residue polypeptide: Ribonuclease PH (239 aa).

Phosphate contacts are provided by residues arginine 86 and 124-126; that span reads GTR.

Belongs to the RNase PH family. Homohexameric ring arranged as a trimer of dimers.

It catalyses the reaction tRNA(n+1) + phosphate = tRNA(n) + a ribonucleoside 5'-diphosphate. Phosphorolytic 3'-5' exoribonuclease that plays an important role in tRNA 3'-end maturation. Removes nucleotide residues following the 3'-CCA terminus of tRNAs; can also add nucleotides to the ends of RNA molecules by using nucleoside diphosphates as substrates, but this may not be physiologically important. Probably plays a role in initiation of 16S rRNA degradation (leading to ribosome degradation) during starvation. The polypeptide is Ribonuclease PH (Sinorhizobium fredii (strain NBRC 101917 / NGR234)).